The sequence spans 111 residues: Large ribosomal subunit protein uL23 (111 aa).

Belongs to the universal ribosomal protein uL23 family. Part of the 50S ribosomal subunit. Contacts protein L29, and trigger factor when it is bound to the ribosome.

Functionally, one of the early assembly proteins it binds 23S rRNA. One of the proteins that surrounds the polypeptide exit tunnel on the outside of the ribosome. Forms the main docking site for trigger factor binding to the ribosome. The polypeptide is Large ribosomal subunit protein uL23 (Nitrosomonas eutropha (strain DSM 101675 / C91 / Nm57)).